Here is a 419-residue protein sequence, read N- to C-terminus: MLSASTMKEVVYWSPKKVADWLLENAMPEYCEPLGHFTGQDLINLTQEDFTKPPLCRVSSDNGQRLLDMIETLKMEHHIEAHKNGHANGHLSIGVDIPNPDGSFSIKIKPNGMPNGFRKEMIKIPMPEPERSQYPMEWGKTLLAFLYALSCFVLTTVMISVVHERVPPKEVQPPLPDTFFDHFNRVQWAFSICEINGMILVGLWLFQWLLLKYKSIISRRFFCIVGTLYLYRCITMYVTTLPVPGMHFNCSPKLFGDWEAQVRRIMKLIAGGGLSITGSHNMCGDYLYSGHTVMLTLTYLFIKEYSPRRLWWYHWICWLLSVVGIFCILLAHDHYTVDVVVAYYITTRLFWWYHTMANQQVLKEASQMNLLARVWWYRPFQYFEKNVQGIVPRSYHWPLPWPVVHLSRQVKYSRLVNDT.

Residues 13–76 form the SAM domain; the sequence is WSPKKVADWL…LDMIETLKME (64 aa). Serine 14 bears the Phosphoserine mark. Helical transmembrane passes span 142–162, 190–210, 221–241, 282–302, and 310–330; these read LLAF…ISVV, FSIC…QWLL, FFCI…VTTL, MCGD…YLFI, and LWWY…CILL. Histidine 291 is an active-site residue. Over 331–419 the chain is Cytoplasmic; sequence AHDHYTVDVV…VKYSRLVNDT (89 aa). Residues histidine 334 and aspartate 338 contribute to the active site.

The protein belongs to the sphingomyelin synthase family.

It is found in the golgi apparatus membrane. It carries out the reaction an N-acylsphing-4-enine + a 1,2-diacyl-sn-glycero-3-phosphocholine = a sphingomyelin + a 1,2-diacyl-sn-glycerol. It catalyses the reaction 1-(9Z-octadecenoyl)-2-acyl-sn-3-glycerol + a sphingomyelin = a 1-(9Z-octadecenoyl)-2-acyl-sn-glycero-3-phosphocholine + an N-acylsphing-4-enine. The enzyme catalyses N-hexadecanoylsphinganine + a 1,2-diacyl-sn-glycero-3-phosphocholine = N-hexadecanoyl-sphinganine-1-phosphocholine + a 1,2-diacyl-sn-glycerol. The catalysed reaction is N-hexadecanoyl-(4R)-hydroxysphinganine + a 1,2-diacyl-sn-glycero-3-phosphocholine = N-hexadecanoyl-(4R)-hydroxysphinganine-phosphocholine + a 1,2-diacyl-sn-glycerol. It carries out the reaction an N-acylsphing-4-enine + a 1,2-diacyl-sn-glycero-3-phosphoethanolamine = an N-acylsphing-4-enine 1-phosphoethanolamine + a 1,2-diacyl-sn-glycerol. Its pathway is sphingolipid metabolism. Its function is as follows. Major sphingomyelin synthase at the Golgi apparatus. Catalyzes the reversible transfer of phosphocholine moiety in sphingomyelin biosynthesis: in the forward reaction transfers phosphocholine head group of phosphatidylcholine (PC) on to ceramide (CER) to form ceramide phosphocholine (sphingomyelin, SM) and diacylglycerol (DAG) as by-product, and in the reverse reaction transfers phosphocholine from SM to DAG to form PC and CER. The direction of the reaction depends on the levels of CER and DAG in Golgi membranes. Converts the newly synthesized CER, that is transported from the endoplasmic reticulum to the trans-Golgi by the Cer transport protein (CERT), to SM. Can form a heteromeric complex with glucosylceramide synthase (GCS) increasing SMS activity and reducing glucosylceramide synthesis, a critical mechanism that controls the metabolic fate of CER in the Golgi. Does not use free phosphorylcholine or CDP-choline as donor. Can also transfer phosphoethanolamine head group of phosphatidylethanolamine (PE) on to CER to form ceramide phosphoethanolamine (CPE). Regulates receptor-mediated signal transduction via mitogenic DAG and proapoptotic CER, as well as via SM, a structural component of membrane rafts that serve as platforms for signal transduction and protein sorting. Plays a role in secretory transport via regulation of DAG pool at the Golgi apparatus and its downstream effects on PRKD1. This chain is Phosphatidylcholine:ceramide cholinephosphotransferase 1 (Sgms1), found in Rattus norvegicus (Rat).